The following is a 284-amino-acid chain: Diaminopimelate epimerase (284 aa).

Substrate contacts are provided by Asn20, Gln53, and Asn73. Catalysis depends on Cys82, which acts as the Proton donor. Substrate is bound by residues 83 to 84 (GN), Asn167, Asn200, and 218 to 219 (ER). Cys227 acts as the Proton acceptor in catalysis. Position 228–229 (228–229 (GS)) interacts with substrate.

The protein belongs to the diaminopimelate epimerase family. As to quaternary structure, homodimer.

Its subcellular location is the cytoplasm. The catalysed reaction is (2S,6S)-2,6-diaminopimelate = meso-2,6-diaminopimelate. It participates in amino-acid biosynthesis; L-lysine biosynthesis via DAP pathway; DL-2,6-diaminopimelate from LL-2,6-diaminopimelate: step 1/1. Catalyzes the stereoinversion of LL-2,6-diaminopimelate (L,L-DAP) to meso-diaminopimelate (meso-DAP), a precursor of L-lysine and an essential component of the bacterial peptidoglycan. The protein is Diaminopimelate epimerase of Xylella fastidiosa (strain M12).